The following is a 431-amino-acid chain: Gamma-glutamyl phosphate reductase (431 aa).

It belongs to the gamma-glutamyl phosphate reductase family.

It localises to the cytoplasm. The catalysed reaction is L-glutamate 5-semialdehyde + phosphate + NADP(+) = L-glutamyl 5-phosphate + NADPH + H(+). It functions in the pathway amino-acid biosynthesis; L-proline biosynthesis; L-glutamate 5-semialdehyde from L-glutamate: step 2/2. Catalyzes the NADPH-dependent reduction of L-glutamate 5-phosphate into L-glutamate 5-semialdehyde and phosphate. The product spontaneously undergoes cyclization to form 1-pyrroline-5-carboxylate. The sequence is that of Gamma-glutamyl phosphate reductase from Synechococcus elongatus (strain ATCC 33912 / PCC 7942 / FACHB-805) (Anacystis nidulans R2).